The primary structure comprises 113 residues: Large ribosomal subunit protein uL18 (113 aa).

It belongs to the universal ribosomal protein uL18 family. As to quaternary structure, part of the 50S ribosomal subunit; part of the 5S rRNA/L5/L18/L25 subcomplex. Contacts the 5S and 23S rRNAs.

Its function is as follows. This is one of the proteins that bind and probably mediate the attachment of the 5S RNA into the large ribosomal subunit, where it forms part of the central protuberance. This is Large ribosomal subunit protein uL18 from Phocaeicola vulgatus (strain ATCC 8482 / DSM 1447 / JCM 5826 / CCUG 4940 / NBRC 14291 / NCTC 11154) (Bacteroides vulgatus).